The chain runs to 119 residues: Holo-[acyl-carrier-protein] synthase (119 aa).

Mg(2+)-binding residues include D8 and E58.

The protein belongs to the P-Pant transferase superfamily. AcpS family. Requires Mg(2+) as cofactor.

The protein resides in the cytoplasm. It carries out the reaction apo-[ACP] + CoA = holo-[ACP] + adenosine 3',5'-bisphosphate + H(+). Its function is as follows. Transfers the 4'-phosphopantetheine moiety from coenzyme A to a Ser of acyl-carrier-protein. This chain is Holo-[acyl-carrier-protein] synthase, found in Streptococcus mutans serotype c (strain ATCC 700610 / UA159).